A 420-amino-acid chain; its full sequence is MKQQIFRLLADLRFSIFLLLLISFCSIVGTVIEQDQSIEIYKTNYPLTNPVFGVLTWDRILLFGLDHVYRTWWFFALIFLFGLSLILCTFLQQLPSLKIARRCQFFRTTNQFYRLKISTVLNDFSFNKILGRITGSQYSIFQQKNIVYCYKGLIGRIAPILVHLSMILILVGTIVGSLFGFKAQEIVPKTENFHIQNILANGQLTVIPKTSARINDFWITYTKTKTVSQFYSDISILNKQGNEIERKTISVNHPLIHNGVYYYQTDWNLVGLRFKTMANEIIEYPLINFSENQKIWLTWISTNKSLTEGVVTIIDNLEGYCSIYNETGQFLGNIELNEIINLKQPLTLIEIISSTGLQIKTDPGIQIIYSGFFFLMLSTLISYITYSQIWIIQKEKKLFIGGTTNRAVFDFELEFFKIIK.

Helical transmembrane passes span 12-32 (LRFS…GTVI), 71-91 (TWWF…CTFL), and 157-177 (IAPI…IVGS).

The protein belongs to the Ccs1/CcsB family. May interact with CcsA.

It is found in the plastid. Its subcellular location is the chloroplast thylakoid membrane. Required during biogenesis of c-type cytochromes (cytochrome c6 and cytochrome f) at the step of heme attachment. This is Cytochrome c biogenesis protein Ccs1 from Phaeodactylum tricornutum (strain CCAP 1055/1).